Here is a 362-residue protein sequence, read N- to C-terminus: NAD(P)H-quinone oxidoreductase subunit 1, chloroplastic (362 aa).

The next 8 membrane-spanning stretches (helical) occupy residues 29–49, 103–123, 128–148, 164–184, 202–222, 247–267, 303–323, and 342–362; these read ILPI…IVWL, IAVI…HFVL, IGVF…LMAG, AAQS…ISLL, FFGW…ISSL, YSGI…LVSS, TMGI…SITI, and FLLP…LVSL.

Belongs to the complex I subunit 1 family. As to quaternary structure, NDH is composed of at least 16 different subunits, 5 of which are encoded in the nucleus.

The protein localises to the plastid. Its subcellular location is the chloroplast thylakoid membrane. The catalysed reaction is a plastoquinone + NADH + (n+1) H(+)(in) = a plastoquinol + NAD(+) + n H(+)(out). The enzyme catalyses a plastoquinone + NADPH + (n+1) H(+)(in) = a plastoquinol + NADP(+) + n H(+)(out). In terms of biological role, NDH shuttles electrons from NAD(P)H:plastoquinone, via FMN and iron-sulfur (Fe-S) centers, to quinones in the photosynthetic chain and possibly in a chloroplast respiratory chain. The immediate electron acceptor for the enzyme in this species is believed to be plastoquinone. Couples the redox reaction to proton translocation, and thus conserves the redox energy in a proton gradient. The protein is NAD(P)H-quinone oxidoreductase subunit 1, chloroplastic of Hordeum vulgare (Barley).